The primary structure comprises 678 residues: Protein mono-ADP-ribosyltransferase PARP15 (678 aa).

Residues 1–19 show a composition bias toward low complexity; it reads MAAPGPLPAAALSPGAPTP. The tract at residues 1 to 67 is disordered; it reads MAAPGPLPAA…SSRSMSRDNK (67 aa). Positions 49–58 are enriched in basic residues; it reads GARKASRRSS. Macro domains follow at residues 78-267 and 293-464; these read NVVA…TNWS and CFTA…KKRD. Substrate contacts are provided by residues 312–313, 324–325, arginine 331, valine 335, 409–413, and glutamine 449; these read DI, ST, and GTGNA. In terms of domain architecture, PARP catalytic spans 482–678; sequence LPEHWTDMNH…YPEYLITFTA (197 aa).

The protein belongs to the ARTD/PARP family.

It is found in the nucleus. It carries out the reaction L-aspartyl-[protein] + NAD(+) = 4-O-(ADP-D-ribosyl)-L-aspartyl-[protein] + nicotinamide. The enzyme catalyses L-glutamyl-[protein] + NAD(+) = 5-O-(ADP-D-ribosyl)-L-glutamyl-[protein] + nicotinamide. Mono-ADP-ribosyltransferase that mediates mono-ADP-ribosylation of target proteins. Acts as a negative regulator of transcription. The sequence is that of Protein mono-ADP-ribosyltransferase PARP15 from Homo sapiens (Human).